Here is a 420-residue protein sequence, read N- to C-terminus: Glucose-1-phosphate adenylyltransferase (420 aa).

Residues Y107, G173, 188–189 (EK), and S206 each bind alpha-D-glucose 1-phosphate.

This sequence belongs to the bacterial/plant glucose-1-phosphate adenylyltransferase family. Homotetramer.

The enzyme catalyses alpha-D-glucose 1-phosphate + ATP + H(+) = ADP-alpha-D-glucose + diphosphate. Its pathway is glycan biosynthesis; glycogen biosynthesis. Functionally, involved in the biosynthesis of ADP-glucose, a building block required for the elongation reactions to produce glycogen. Catalyzes the reaction between ATP and alpha-D-glucose 1-phosphate (G1P) to produce pyrophosphate and ADP-Glc. The sequence is that of Glucose-1-phosphate adenylyltransferase from Shewanella frigidimarina (strain NCIMB 400).